We begin with the raw amino-acid sequence, 2145 residues long: Glutamate synthase [NADH] (2145 aa).

Positions 1–53 are excised as a propeptide; that stretch reads MPVLKSDNFDPLEEAYEGGTIQNYNDEHHLHKSWANVIPDKRGLYDPDYEHDA. Cys54 acts as the For GATase activity in catalysis. Residues 54–455 form the Glutamine amidotransferase type-2 domain; that stretch reads CGVGFVANKH…PGDLFLVDTQ (402 aa). 1132-1189 is a binding site for FMN; sequence LAETHQTLVLNDLRRNVVVQTDGQLRTGFDIAVAVLLGAESFTLATVPLIAMGCVMLR. Cys1185, Cys1191, and Cys1196 together coordinate [3Fe-4S] cluster. Residues 1551–1600 are a coiled coil; it reads KKVLLKEKAEAAKAKAKATSEYLKKFRSNQEVDDEVNTLLIANQKAKEQE. Position 1928-1942 (1928-1942) interacts with NAD(+); that stretch reads GGGDTGNDCLGTSVR. Residue Thr2070 is modified to Phosphothreonine.

Belongs to the glutamate synthase family. In terms of assembly, homotrimer. The cofactor is [3Fe-4S] cluster. FAD is required as a cofactor. Requires FMN as cofactor.

The catalysed reaction is 2 L-glutamate + NAD(+) = L-glutamine + 2-oxoglutarate + NADH + H(+). It participates in amino-acid biosynthesis; L-glutamate biosynthesis via GLT pathway; L-glutamate from 2-oxoglutarate and L-glutamine (NAD(+) route): step 1/1. The protein operates within energy metabolism; nitrogen metabolism. With respect to regulation, inhibited by homocysteine sulfonamide. Functionally, forms L-glutamate from L-glutamine and 2-oxoglutarate. Represents an alternative pathway to L-glutamate dehydrogenase for the biosynthesis of L-glutamate. Participates with glutamine synthetase in ammonia assimilation processes. The enzyme is specific for NADH, L-glutamine and 2-oxoglutarate. The chain is Glutamate synthase [NADH] (GLT1) from Saccharomyces cerevisiae (strain ATCC 204508 / S288c) (Baker's yeast).